Here is a 431-residue protein sequence, read N- to C-terminus: MALQRPKGTQDHLPDGSPKLSRDVQASAFAYVQDTARRVLERAGAQFIATPLFEEAELVRRGVGGSTDIVRKEMFTVYYFGDHGGYVLRPEGTAGIVRAYLQNGLKQLPAPLKLWTHGPMFRAENVQKGRLRQFHQVDYEALGSADPLVDAEAIWLMWEVVRELGLTGVRVKLGSIGDPADREAYNAYLRDCFTPHAARLSDDSRDRLTRNPMRILDSKSTGDQALIGELQVKPMLDFLGEAASSHFAAVQAYLRAWNVPFDIDPAIVRGLDYYRRTAWELHHQGVGAKSALGGGGRYDGLSTQLGGPEVPGIGWAFGIERLLLALEAEGVTFPEESGPLLFLAALDEEHVARAAGLALEGRRVARVEFAYRALKPANAFKEADRRRARYAGLLGSDEAERGVLTIKHLASGEQQEVPLAALNTFLAERAR.

A disordered region spans residues 1–20; that stretch reads MALQRPKGTQDHLPDGSPKL.

It belongs to the class-II aminoacyl-tRNA synthetase family. In terms of assembly, homodimer.

It localises to the cytoplasm. It catalyses the reaction tRNA(His) + L-histidine + ATP = L-histidyl-tRNA(His) + AMP + diphosphate + H(+). The protein is Histidine--tRNA ligase of Deinococcus geothermalis (strain DSM 11300 / CIP 105573 / AG-3a).